We begin with the raw amino-acid sequence, 263 residues long: Retinoic acid early transcript 1E (263 aa).

The N-terminal stretch at 1 to 30 (MRRISLTSSPVRLLLFLLLLLIALEIMVGG) is a signal peptide. The MHC class I alpha-1 like; down-regulates the cell surface expression of KLRK1 stretch occupies residues 31 to 116 (HSLCFNFTIK…DIKPQIKTSD (86 aa)). The Extracellular portion of the chain corresponds to 31 to 225 (HSLCFNFTIK…IHWSSSSLPD (195 aa)). N-linked (GlcNAc...) asparagine glycosylation is found at N36, N154, and N212. Residues 117-207 (PSTLQVEMFC…GHWEAMPEPT (91 aa)) are MHC class I alpha-2 like; down-regulates the cell surface expression of KLRK1. Cysteines 126 and 189 form a disulfide. A helical transmembrane segment spans residues 226–248 (RWIILGAFILLVLMGIVLICVWW). The Cytoplasmic portion of the chain corresponds to 249–263 (QNGEWQAGLWPLRTS).

Belongs to the MHC class I family. In terms of assembly, binds to KLRK1/NKG2D. (Microbial infection) Contrary to other family members, does not interact with CMV glycoprotein UL16. As to expression, predominantly expressed in the skin, but also expressed in testis and trachea. Up-regulated in tumor cells of different origins. Expression progressively decreased after treatment of tumor cells with retinoic acid.

Its subcellular location is the membrane. The protein resides in the secreted. Binds and activates the KLRK1/NKG2D receptor, mediating natural killer cell cytotoxicity. The sequence is that of Retinoic acid early transcript 1E from Homo sapiens (Human).